The primary structure comprises 544 residues: Lysophosphatidylcholine acyltransferase 2 (544 aa).

Residues 1 to 58 (MNRCAEAAAVAATVPGSGVGDAGLRPPMVPRQASFFPPPVPNPFVQQTTISASRRLQM) lie on the Cytoplasmic side of the membrane. The chain crosses the membrane as a helical; Signal-anchor for type II membrane protein span at residues 59 to 79 (FLLGIILLPVRALLVGIILLL). Topologically, residues 80-544 (AWPFAVISTA…EEGTSDKKVD (465 aa)) are lumenal. The HXXXXD motif signature appears at 146–151 (HSTFFD). Residues 220–223 (EGTC) carry the EGTC motif motif. EF-hand domains follow at residues 391–426 (PVSD…LCNP) and 428–463 (NTEE…SLGV). Residues aspartate 404, asparagine 406, aspartate 408, serine 410, glutamate 415, aspartate 441, aspartate 443, aspartate 445, tyrosine 447, and glutamate 452 each coordinate Ca(2+). Residues 520–532 (TAPSVASNKVSPE) show a composition bias toward polar residues. Positions 520-544 (TAPSVASNKVSPESQEEGTSDKKVD) are disordered.

Belongs to the 1-acyl-sn-glycerol-3-phosphate acyltransferase family. In terms of tissue distribution, highest expression is found in resident macrophages and casein-induced neutrophils followed by skin, colon, spleen and thioglycollate-induced macrophages. Detected in erythroleukemic cells but not in reticulocytes.

Its subcellular location is the endoplasmic reticulum membrane. The protein localises to the golgi apparatus membrane. It localises to the cell membrane. It is found in the lipid droplet. It catalyses the reaction a 1-acyl-sn-glycero-3-phosphocholine + an acyl-CoA = a 1,2-diacyl-sn-glycero-3-phosphocholine + CoA. The catalysed reaction is a 1-O-alkyl-sn-glycero-3-phosphocholine + acetyl-CoA = a 1-O-alkyl-2-acetyl-sn-glycero-3-phosphocholine + CoA. The enzyme catalyses a 1-acyl-sn-glycero-3-phosphate + an acyl-CoA = a 1,2-diacyl-sn-glycero-3-phosphate + CoA. It carries out the reaction a 1-O-(1Z-alkenyl)-sn-glycero-3-phosphocholine + an acyl-CoA = a 1-O-(1Z-alkenyl)-2-acyl-sn-glycero-3-phosphocholine + CoA. It catalyses the reaction 1-O-octadecyl-sn-glycero-3-phosphocholine + acetyl-CoA = 1-O-octadecyl-2-acetyl-sn-glycero-3-phosphocholine + CoA. The catalysed reaction is 1-hexadecanoyl-sn-glycero-3-phosphocholine + acetyl-CoA = 1-hexadecanoyl-2-acetyl-sn-glycero-3-phosphocholine + CoA. The enzyme catalyses 1-octadecanoyl-sn-glycero-3-phosphocholine + acetyl-CoA = 1-octadecanoyl-2-acetyl-sn-glycero-3-phosphocholine + CoA. It carries out the reaction a 1-O-(1Z-alkenyl)-sn-glycero-3-phosphocholine + acetyl-CoA = 1-O-(1Z)-alkenyl-2-acetyl-sn-glycero-3-phosphocholine + CoA. It catalyses the reaction 1-O-hexadecyl-sn-glycero-3-phosphocholine + acetyl-CoA = 1-O-hexadecyl-2-acetyl-sn-glycero-3-phosphocholine + CoA. The catalysed reaction is 1-O-octadecyl-sn-glycero-3-phosphocholine + (5Z,8Z,11Z,14Z)-eicosatetraenoyl-CoA = 1-O-octadecyl-2-(5Z,8Z,11Z,14Z)-eicosatetraenoyl-sn-glycero-3-phosphocholine + CoA. The enzyme catalyses 1-hexadecanoyl-sn-glycero-3-phosphate + (9Z)-octadecenoyl-CoA = 1-hexadecanoyl-2-(9Z-octadecenoyl)-sn-glycero-3-phosphate + CoA. It carries out the reaction 1-(9Z-octadecenoyl)-sn-glycero-3-phosphate + (9Z)-octadecenoyl-CoA = 1,2-di-(9Z-octadecenoyl)-sn-glycero-3-phosphate + CoA. It catalyses the reaction 1-(9Z-octadecenoyl)-sn-glycero-3-phosphate + hexadecanoyl-CoA = 1-(9Z)-octadecenoyl-2-hexadecanoyl-sn-glycero-3-phosphate + CoA. The catalysed reaction is 1-heptadecanoyl-sn-glycero-3-phosphate + (9Z)-octadecenoyl-CoA = 1-heptadecanoyl-2-(9Z)-octadecenoyl-sn-glycero-3-phosphate + CoA. The enzyme catalyses 1-octadecanoyl-sn-glycero-3-phosphate + (9Z)-octadecenoyl-CoA = 1-octadecanoyl-2-(9Z-octadecenoyl)-sn-glycero-3-phosphate + CoA. It carries out the reaction heptadecanoyl-CoA + 1-(9Z-octadecenoyl)-sn-glycero-3-phosphate = 1-(9Z)-octadecenoyl-2-heptadecanoyl-sn-glycero-3-phosphate + CoA. It catalyses the reaction 1-(9Z-octadecenoyl)-sn-glycero-3-phosphate + (9Z,12Z)-octadecadienoyl-CoA = 1-(9Z)-octadecenoyl-2-(9Z,12Z)-octadecadienoyl-sn-glycero-3-phosphate + CoA. The catalysed reaction is 1-(9Z-octadecenoyl)-sn-glycero-3-phosphate + tetradecanoyl-CoA = 1-(9Z)-octadecenoyl-2-tetradecanoyl-sn-glycero-3-phosphate + CoA. The enzyme catalyses pentadecanoyl-CoA + 1-(9Z-octadecenoyl)-sn-glycero-3-phosphate = 1-(9Z)-octadecenoyl-2-pentadecanoyl-sn-glycero-3-phosphate + CoA. It carries out the reaction nonadecanoyl-CoA + 1-(9Z-octadecenoyl)-sn-glycero-3-phosphate = 1-(9Z)-octadecenoyl-2-nonadecanoyl-sn-glycero-3-phosphate + CoA. It catalyses the reaction 1-hexadecanoyl-sn-glycero-3-phosphocholine + (9Z)-octadecenoyl-CoA = 1-hexadecanoyl-2-(9Z-octadecenoyl)-sn-glycero-3-phosphocholine + CoA. Its pathway is lipid metabolism; phospholipid metabolism. Its activity is regulated as follows. Acetyltransferase activity is increased following acute inflammatory stimulation by lipopolysaccharide (LPS). Acyltransferase activity is unchanged. Exhibits both acyltransferase and acetyltransferase activities. Activity is calcium-dependent. Catalyzes the conversion of lysophosphatidylcholine (1-acyl-sn-glycero-3-phosphocholine or LPC) into phosphatidylcholine (1,2-diacyl-sn-glycero-3-phosphocholine or PC). Catalyzes the conversion 1-acyl-sn-glycerol-3-phosphate (lysophosphatidic acid or LPA) into 1,2-diacyl-sn-glycerol-3-phosphate (phosphatidic acid or PA) by incorporating an acyl moiety at the sn-2 position of the glycerol backbone. Involved in platelet-activating factor (PAF) biosynthesis by catalyzing the conversion of the PAF precursor, 1-O-alkyl-sn-glycero-3-phosphocholine (lyso-PAF) into 1-O-alkyl-2-acetyl-sn-glycero-3-phosphocholine (PAF). Also converts lyso-PAF to 1-O-alkyl-2-acyl-sn-glycero-3-phosphocholine (PC), a major component of cell membranes and a PAF precursor. Under resting conditions, acyltransferase activity is preferred. Upon acute inflammatory stimulus, acetyltransferase activity is enhanced and PAF synthesis increases. Involved in the regulation of lipid droplet number and size. This Mus musculus (Mouse) protein is Lysophosphatidylcholine acyltransferase 2 (Lpcat2).